The following is a 328-amino-acid chain: MIERIWSGESPLWRLLLPLSWLYGLVSGLIRLCYKLGLKRAWRAPVPVVVVGNLTAGGNGKTPVVIWLVEQLQQRGVRVGVVSRGYGGKAESYPLLLSDDTTTAQAGDEPVLIYQRTGAPVAVSPVRSDAVKAILTQHPDMQIIVTDDGLQHYRLARDVEVVVIDGVRRFGNGWWLPAGPMRERAGRLKTVDTVIVNGGVPRSGEIPMHLAPGQAVNLRTGTRCDIAKLTHVVAMAGIGHPPRFFATLKMCGVNPEKCVPLADHQSLTHSDVCALLNSGQTLVMTEKDAVKCRAFAEDNWWYLPVDARFAGHEPEQLLAKLISLASGE.

55–62 (TAGGNGKT) contributes to the ATP binding site.

It belongs to the LpxK family.

The enzyme catalyses a lipid A disaccharide + ATP = a lipid IVA + ADP + H(+). It functions in the pathway glycolipid biosynthesis; lipid IV(A) biosynthesis; lipid IV(A) from (3R)-3-hydroxytetradecanoyl-[acyl-carrier-protein] and UDP-N-acetyl-alpha-D-glucosamine: step 6/6. Functionally, transfers the gamma-phosphate of ATP to the 4'-position of a tetraacyldisaccharide 1-phosphate intermediate (termed DS-1-P) to form tetraacyldisaccharide 1,4'-bis-phosphate (lipid IVA). The polypeptide is Tetraacyldisaccharide 4'-kinase (Escherichia fergusonii (strain ATCC 35469 / DSM 13698 / CCUG 18766 / IAM 14443 / JCM 21226 / LMG 7866 / NBRC 102419 / NCTC 12128 / CDC 0568-73)).